Here is a 584-residue protein sequence, read N- to C-terminus: DNA damage-binding protein CMR1 (584 aa).

Residues 29-44 (SATDSISREIPNQRQA) are compositionally biased toward polar residues. The segment at 29–90 (SATDSISREI…TEEYQKVKEE (62 aa)) is disordered. Basic and acidic residues predominate over residues 59 to 68 (IKKEPQEPSR). Positions 76-110 (VTMENTEEYQKVKEEMEEAERKKKELEKLKSTRLF) form a coiled coil. 6 WD repeats span residues 226-267 (ITHQ…DEDP), 274-314 (PHGR…SSEV), 373-413 (LHDK…KSNS), 431-469 (SSRL…SELP), 506-549 (GRWV…LAHL), and 553-584 (EKVG…YLFE).

The protein belongs to the WD repeat DDB2/WDR76 family.

Functionally, DNA-binding protein that binds to both single- and double-stranded DNA. Binds preferentially to UV-damaged DNA. May be involved in DNA-metabolic processes. The protein is DNA damage-binding protein CMR1 of Debaryomyces hansenii (strain ATCC 36239 / CBS 767 / BCRC 21394 / JCM 1990 / NBRC 0083 / IGC 2968) (Yeast).